The primary structure comprises 674 residues: Primary amine oxidase (674 aa).

The signal sequence occupies residues 1 to 25; the sequence is MASTTTMRLALFSVLTLLSFHAVVS. N-linked (GlcNAc...) asparagine glycosylation occurs at asparagine 156. Cysteines 162 and 183 form a disulfide. Polar residues predominate over residues 226–236; that stretch reads ENTEYQVSKQS. The interval 226–251 is disordered; the sequence is ENTEYQVSKQSPPFGPKQHSLTSHQP. 323-334 is a substrate binding site; that stretch reads FFDSGEFGFGLS. Residue aspartate 325 is the Proton acceptor of the active site. Cysteines 344 and 370 form a disulfide. The N-linked (GlcNAc...) asparagine glycan is linked to asparagine 389. Residue 409–414 coordinates substrate; sequence VGNYDN. Tyrosine 412 (schiff-base intermediate with substrate; via topaquinone) is an active-site residue. Tyrosine 412 is subject to 2',4',5'-topaquinone. The Cu cation site is built by histidine 467 and histidine 469. Residues aspartate 476, phenylalanine 477, aspartate 478, aspartate 617, and isoleucine 618 each coordinate Mn(2+). Histidine 628 is a Cu cation binding site.

Belongs to the copper/topaquinone oxidase family. Homodimer. It depends on Cu cation as a cofactor. The cofactor is Mn(2+). L-topaquinone is required as a cofactor. Post-translationally, topaquinone (TPQ) is generated by copper-dependent autoxidation of a specific tyrosyl residue.

It catalyses the reaction a primary methyl amine + O2 + H2O = an aldehyde + H2O2 + NH4(+). The chain is Primary amine oxidase from Pisum sativum (Garden pea).